The sequence spans 121 residues: Small ribosomal subunit protein uS13 (121 aa).

The interval 94–121 is disordered; sequence GLPVRGQNTKNNARTRKGPRRTVANKKK. Basic residues predominate over residues 106 to 121; sequence ARTRKGPRRTVANKKK.

It belongs to the universal ribosomal protein uS13 family. In terms of assembly, part of the 30S ribosomal subunit. Forms a loose heterodimer with protein S19. Forms two bridges to the 50S subunit in the 70S ribosome.

Functionally, located at the top of the head of the 30S subunit, it contacts several helices of the 16S rRNA. In the 70S ribosome it contacts the 23S rRNA (bridge B1a) and protein L5 of the 50S subunit (bridge B1b), connecting the 2 subunits; these bridges are implicated in subunit movement. Contacts the tRNAs in the A and P-sites. This chain is Small ribosomal subunit protein uS13, found in Geobacillus sp. (strain WCH70).